The chain runs to 302 residues: ATP synthase gamma chain, sodium ion specific (302 aa).

This sequence belongs to the ATPase gamma chain family. In terms of assembly, F-type ATPases have 2 components, CF(1) - the catalytic core - and CF(0) - the membrane proton channel. CF(1) has five subunits: alpha(3), beta(3), gamma(1), delta(1), epsilon(1). CF(0) has three main subunits: a, b and c.

The protein localises to the cell membrane. Inhibited by nitrate. Functionally, produces ATP from ADP in the presence of a proton gradient across the membrane. The gamma chain is believed to be important in regulating ATPase activity and the flow of protons through the CF(0) complex. The chain is ATP synthase gamma chain, sodium ion specific (atpG) from Acetobacterium woodii (strain ATCC 29683 / DSM 1030 / JCM 2381 / KCTC 1655 / WB1).